The sequence spans 1217 residues: Myosin-1 (1217 aa).

The interval 1–26 (MAILKRTNRAKAATAAAPNSTGKSNG) is disordered. Low complexity predominate over residues 10–19 (AKAATAAAPN). ATP-binding positions include 17–24 (APNSTGKS) and 133–140 (GESGAGKT). Positions 40-720 (VGVDDLTLLS…TLFALEDMRD (681 aa)) constitute a Myosin motor domain. Ser361 carries the post-translational modification Phosphoserine. Tyr363 carries the post-translational modification Phosphotyrosine. Residues 409-491 (SIGILDIYGF…PGLFAAMNDA (83 aa)) form an actin-binding region. 2 consecutive IQ domains span residues 724 to 744 (DTMA…RSEA) and 745 to 770 (AACI…EGTK). Phosphoserine is present on Ser742. The TH1 domain occupies 778–964 (RRRYSILGSR…TIHVGTGLPP (187 aa)). Ser782 carries the phosphoserine modification. Positions 961-1105 (GLPPTSKSKP…PPPPPPPAEV (145 aa)) are disordered. The segment covering 998-1013 (KPVSMPAAKSKPAPMA) has biased composition (low complexity). Positions 1015–1025 (PVSTAQQTQNR) are enriched in polar residues. Residues 1045–1075 (TSTTTTIKQATTVSASKPAPSTVTSAASSPS) show a composition bias toward low complexity. The segment covering 1076–1088 (NISKPSAPVANNV) has biased composition (polar residues). The span at 1093-1103 (AVPPPPPPPPA) shows a compositional bias: pro residues. The 60-residue stretch at 1106-1165 (EKKDLYLALYDFAGRSPNEMTIKKDEIIEIVQKEPSGWWLALKNGAEGWVPATYVTEYKG) folds into the SH3 domain. Ser1211 bears the Phosphoserine mark.

The protein belongs to the TRAFAC class myosin-kinesin ATPase superfamily. Myosin family. In terms of assembly, interacts with cam2. Interacts (via SH3 domain) with vrp1. Post-translationally, phosphorylation of the TEDS site (Ser-361) is required for the polarization of the actin cytoskeleton. Phosphorylation probably activates the myosin-I ATPase activity.

Its subcellular location is the cytoplasm. It is found in the cytoskeleton. The protein resides in the actin patch. In terms of biological role, type-I myosin implicated in the organization of the actin cytoskeleton. Required for proper actin cytoskeleton polarization. At the cell cortex, assembles in patch-like structures together with proteins from the actin-polymerizing machinery and promotes actin assembly. Functions as actin nucleation-promoting factor (NPF) for the Arp2/3 complex. Contributes to proper septation by transporting vesicles containing septal material to the division site and is involved in the formation of sterol-rich membrane domains at the cell division site. Required also for mating. The polypeptide is Myosin-1 (myo1) (Schizosaccharomyces pombe (strain 972 / ATCC 24843) (Fission yeast)).